A 262-amino-acid polypeptide reads, in one-letter code: Apolipoprotein A-Ia (262 aa).

An N-terminal signal peptide occupies residues 1–18 (MKFVALALTLLLALGSQA). The segment at 32-63 (YKAAALVYLNQVKDQAEKALDNLDGTDYEQYK) is 3 X approximate tandem repeats. 2 consecutive repeat copies span residues 64-85 (LQLS…QALT) and 87-107 (YAET…ERVM). Residues 64–262 (LQLSESLTKL…YETIAKAIQA (199 aa)) are 10 X approximate tandem repeats. One copy of the 3; half-length repeat lies at 108–118 (TDVEDLRSKLE). 5 repeat units span residues 119-140 (PHRA…EKLE), 141-162 (PVFQ…AKLE), 163-184 (PLMD…SKVV), 185-206 (PMVE…TMAA), and 207-228 (PYAE…EKIA). Residues 229–239 (PHTQDLQTRME) form a 9; half-length repeat. Copy 10 of the repeat occupies 240 to 262 (PYMENVRTTFAQMYETIAKAIQA).

This sequence belongs to the apolipoprotein A1/A4/E family. Homodimer. Interacts with naxe and yjefn3.

It is found in the secreted. Functionally, participates in the reverse transport of cholesterol from tissues to the liver for excretion by promoting cholesterol efflux from tissues and by acting as a cofactor for the lecithin cholesterol acyltransferase (LCAT). The sequence is that of Apolipoprotein A-Ia from Danio rerio (Zebrafish).